Reading from the N-terminus, the 71-residue chain is Large ribosomal subunit protein bL31 (71 aa).

C16, C18, C37, and C40 together coordinate Zn(2+).

This sequence belongs to the bacterial ribosomal protein bL31 family. Type A subfamily. Part of the 50S ribosomal subunit. The cofactor is Zn(2+).

Its function is as follows. Binds the 23S rRNA. This Serratia proteamaculans (strain 568) protein is Large ribosomal subunit protein bL31.